The chain runs to 351 residues: sn-1 oleoyl-lipid 12-desaturase (351 aa).

Residues 1-20 form a disordered region; it reads MTLSIVKSEDSSSRPSAVPS. The next 2 helical transmembrane spans lie at 44-62 and 68-88; these read AWMT…WLGI and FLLP…FVIG. The Histidine box-1 signature appears at 89 to 93; it reads HDCGH. A helical membrane pass occupies residues 100 to 120; that stretch reads VWVNDWVGHILFLPIIYPFHS. The Histidine box-2 motif lies at 125 to 129; that stretch reads HNQHH. 2 consecutive transmembrane segments (helical) span residues 199 to 219 and 221 to 241; these read LLVI…IGVW and FVKF…TFTL. A Histidine box-3 motif is present at residues 289-293; it reads HHVTT.

Belongs to the fatty acid desaturase type 2 family. Fe(2+) is required as a cofactor.

The protein localises to the cellular thylakoid membrane. It catalyses the reaction a 1-[(9Z)-octadecenoyl]-2-acyl-glycerolipid + 2 reduced [2Fe-2S]-[ferredoxin] + O2 + 2 H(+) = a 1-[(9Z,12Z)-octadecdienoyl]-2-acyl-glycerolipid + 2 oxidized [2Fe-2S]-[ferredoxin] + 2 H2O. The protein operates within lipid metabolism; polyunsaturated fatty acid biosynthesis. Its function is as follows. Desaturase involved in fatty acid biosynthesis. Introduces a double bond at carbon 12 of oleoyl groups (18:1) attached to the sn-1 position of the glycerol moiety of membrane glycerolipids. This is sn-1 oleoyl-lipid 12-desaturase from Arthrospira platensis (Spirulina platensis).